Consider the following 225-residue polypeptide: MAAAGSYQLALQQLTDSALPTGAFAHSLGFETYIERGLVHDEASFGVWLSAFVGQQLSYSDGLAIRFLYEGVSFAELDALLTAQLLPRQLREASTKMGTRLLEIGTEVFPSPELAEYRALVGAGRAAGHQPLAFAVVARSLGVPLTESLAAYLFAAVTSLTQNAVRAIPLGQNAGQRLLRKASDDVAAAVERIGRLAPDDFGAVSPGLEISQMRHERQRARMFMS.

This sequence belongs to the UreF family. UreD, UreF and UreG form a complex that acts as a GTP-hydrolysis-dependent molecular chaperone, activating the urease apoprotein by helping to assemble the nickel containing metallocenter of UreC. The UreE protein probably delivers the nickel.

Its subcellular location is the cytoplasm. Its function is as follows. Required for maturation of urease via the functional incorporation of the urease nickel metallocenter. The protein is Urease accessory protein UreF of Arthrobacter sp. (strain FB24).